Here is a 430-residue protein sequence, read N- to C-terminus: Phosphomethylpyrimidine synthase (430 aa).

Substrate is bound by residues N67, M96, Y125, H161, 183–185 (SRG), 224–227 (DALR), and E263. A Zn(2+)-binding site is contributed by H267. Y290 contacts substrate. Residue H331 participates in Zn(2+) binding. Residues C406, C409, and C413 each coordinate [4Fe-4S] cluster.

Belongs to the ThiC family. Homodimer. [4Fe-4S] cluster serves as cofactor.

It carries out the reaction 5-amino-1-(5-phospho-beta-D-ribosyl)imidazole + S-adenosyl-L-methionine = 4-amino-2-methyl-5-(phosphooxymethyl)pyrimidine + CO + 5'-deoxyadenosine + formate + L-methionine + 3 H(+). It participates in cofactor biosynthesis; thiamine diphosphate biosynthesis. Catalyzes the synthesis of the hydroxymethylpyrimidine phosphate (HMP-P) moiety of thiamine from aminoimidazole ribotide (AIR) in a radical S-adenosyl-L-methionine (SAM)-dependent reaction. The protein is Phosphomethylpyrimidine synthase of Campylobacter jejuni subsp. doylei (strain ATCC BAA-1458 / RM4099 / 269.97).